A 384-amino-acid polypeptide reads, in one-letter code: Succinyl-diaminopimelate desuccinylase (384 aa).

Zn(2+) is bound at residue His71. Asp73 is a catalytic residue. Asp104 lines the Zn(2+) pocket. The Proton acceptor role is filled by Glu139. Glu140, Glu168, and His357 together coordinate Zn(2+).

Belongs to the peptidase M20A family. DapE subfamily. Homodimer. The cofactor is Zn(2+). Co(2+) is required as a cofactor.

The catalysed reaction is N-succinyl-(2S,6S)-2,6-diaminopimelate + H2O = (2S,6S)-2,6-diaminopimelate + succinate. It participates in amino-acid biosynthesis; L-lysine biosynthesis via DAP pathway; LL-2,6-diaminopimelate from (S)-tetrahydrodipicolinate (succinylase route): step 3/3. Catalyzes the hydrolysis of N-succinyl-L,L-diaminopimelic acid (SDAP), forming succinate and LL-2,6-diaminopimelate (DAP), an intermediate involved in the bacterial biosynthesis of lysine and meso-diaminopimelic acid, an essential component of bacterial cell walls. The sequence is that of Succinyl-diaminopimelate desuccinylase from Bradyrhizobium sp. (strain ORS 278).